Here is a 758-residue protein sequence, read N- to C-terminus: MPENFGAMRQDGLVSTSESDSPAPAATPAATLRAEYSKLVEDIRHYRFAYYNEAESLVSDAEFDVLFRRLEEIEALHPELISNDSPTQEVGGEVSAAFTPVQHTSQIYSLEDVFSIEELQSWIIKAQANAEKLAGSIVAERPLRWLTELKIDGLAVNLLYRNGQLVRAATRGDGITGEDITHNVLTIQEIPRQLRGENLPEEVEIRGEVFIASKDFLALNEQIVGTGRAPFANPRNAAAGSLRQKDPADTAKRPLSMLVHGIGSRIGLDVASQSESYALLKAWGLPTSPYFKVLTGYQEVLDYINHYGEHRHDLLHEIDGIVIKIDDFASQNALGFTSRVPRWAVAYKYPPEEVHTKLLDILVNVGRTGRVTPFGVMEPVKVAGSTVEMATLHNQDVVKAKGVLIGDTVVLRKAGDVIPEIVGPVLALRDGREREFVMPTECPSCGTALAPAKEGDVDIRCPNAKSCPDQLRERVFHLAGRGAFDIEALGWEAAIALTQPAEPELAPVRNEAQIFNLVAEDLALVKIKREKKVKGVLSGVHELVPYFYSKGTEEKPSEPTSNTVKLFIELEKAKAQPLWRVLVALSIRHVGPTASRALATAFGSMAAIRAASEPELAEVDGVGPTIAAALIEWFAEDWHREIIDAWAADGVRMADERDESVRRTLAGLTIVVTGSLEKFNRDQAKEAIINRGGKSAGSVSKNTDYVVAGENAGTKLDKAEKLGVTVLDEAGFETLLAHGPDHSAEAEENESEGSTTND.

Residues 1-28 are disordered; that stretch reads MPENFGAMRQDGLVSTSESDSPAPAATP. NAD(+) is bound by residues 60 to 64, 109 to 110, and Glu148; these read DAEFD and SL. Residue Lys150 is the N6-AMP-lysine intermediate of the active site. Arg171, Glu208, Lys324, and Lys348 together coordinate NAD(+). Residues Cys442, Cys445, Cys461, and Cys467 each coordinate Zn(2+). A BRCT domain is found at 660 to 749; that stretch reads SVRRTLAGLT…PDHSAEAEEN (90 aa). Residues 735 to 758 form a disordered region; that stretch reads LLAHGPDHSAEAEENESEGSTTND.

This sequence belongs to the NAD-dependent DNA ligase family. LigA subfamily. Requires Mg(2+) as cofactor. The cofactor is Mn(2+).

The enzyme catalyses NAD(+) + (deoxyribonucleotide)n-3'-hydroxyl + 5'-phospho-(deoxyribonucleotide)m = (deoxyribonucleotide)n+m + AMP + beta-nicotinamide D-nucleotide.. In terms of biological role, DNA ligase that catalyzes the formation of phosphodiester linkages between 5'-phosphoryl and 3'-hydroxyl groups in double-stranded DNA using NAD as a coenzyme and as the energy source for the reaction. It is essential for DNA replication and repair of damaged DNA. This is DNA ligase from Renibacterium salmoninarum (strain ATCC 33209 / DSM 20767 / JCM 11484 / NBRC 15589 / NCIMB 2235).